The primary structure comprises 154 residues: U1 small nuclear ribonucleoprotein C (154 aa).

The Matrin-type zinc finger occupies 4–36; the sequence is YYCDYCDTYLTHDSPSVRKTHCTGRKHKDNVKF.

This sequence belongs to the U1 small nuclear ribonucleoprotein C family. In terms of assembly, U1 snRNP is composed of the 7 core Sm proteins B/B', D1, D2, D3, E, F and G that assemble in a heptameric protein ring on the Sm site of the small nuclear RNA to form the core snRNP, and at least 3 U1 snRNP-specific proteins U1-70K, U1-A and U1-C. U1-C interacts with U1 snRNA and the 5' splice-site region of the pre-mRNA.

It localises to the nucleus. In terms of biological role, component of the spliceosomal U1 snRNP, which is essential for recognition of the pre-mRNA 5' splice-site and the subsequent assembly of the spliceosome. U1-C is directly involved in initial 5' splice-site recognition for both constitutive and regulated alternative splicing. The interaction with the 5' splice-site seems to precede base-pairing between the pre-mRNA and the U1 snRNA. Stimulates commitment or early (E) complex formation by stabilizing the base pairing of the 5' end of the U1 snRNA and the 5' splice-site region. The chain is U1 small nuclear ribonucleoprotein C from Aedes aegypti (Yellowfever mosquito).